The sequence spans 321 residues: Ribosomal RNA small subunit methyltransferase H (321 aa).

S-adenosyl-L-methionine contacts are provided by residues 29–31 (GGH), Asp-48, Tyr-76, Asp-97, and Gln-104. A disordered region spans residues 277-321 (LTRGAEPASETEKAENPRAASVRLRAVERTAPNPDHTRKPTGGAS).

This sequence belongs to the methyltransferase superfamily. RsmH family.

The protein localises to the cytoplasm. The enzyme catalyses cytidine(1402) in 16S rRNA + S-adenosyl-L-methionine = N(4)-methylcytidine(1402) in 16S rRNA + S-adenosyl-L-homocysteine + H(+). Specifically methylates the N4 position of cytidine in position 1402 (C1402) of 16S rRNA. This is Ribosomal RNA small subunit methyltransferase H from Frankia casuarinae (strain DSM 45818 / CECT 9043 / HFP020203 / CcI3).